The chain runs to 196 residues: Imidazoleglycerol-phosphate dehydratase (196 aa).

The protein belongs to the imidazoleglycerol-phosphate dehydratase family.

It is found in the cytoplasm. The enzyme catalyses D-erythro-1-(imidazol-4-yl)glycerol 3-phosphate = 3-(imidazol-4-yl)-2-oxopropyl phosphate + H2O. The protein operates within amino-acid biosynthesis; L-histidine biosynthesis; L-histidine from 5-phospho-alpha-D-ribose 1-diphosphate: step 6/9. This is Imidazoleglycerol-phosphate dehydratase from Ralstonia pickettii (strain 12J).